We begin with the raw amino-acid sequence, 441 residues long: Ribosomal protein uS12 methylthiotransferase RimO (441 aa).

The MTTase N-terminal domain maps to 8-118; that stretch reads PKIGFVSLGC…VLQHVHHYVP (111 aa). Residues cysteine 17, cysteine 53, cysteine 82, cysteine 150, cysteine 154, and cysteine 157 each contribute to the [4Fe-4S] cluster site. The region spanning 136 to 373 is the Radical SAM core domain; the sequence is LTPRHYAYLK…MQLQQQISAE (238 aa). The 66-residue stretch at 376 to 441 folds into the TRAM domain; the sequence is QEKVGREILV…DEYDLWGSRV (66 aa).

It belongs to the methylthiotransferase family. RimO subfamily. It depends on [4Fe-4S] cluster as a cofactor.

The protein resides in the cytoplasm. It carries out the reaction L-aspartate(89)-[ribosomal protein uS12]-hydrogen + (sulfur carrier)-SH + AH2 + 2 S-adenosyl-L-methionine = 3-methylsulfanyl-L-aspartate(89)-[ribosomal protein uS12]-hydrogen + (sulfur carrier)-H + 5'-deoxyadenosine + L-methionine + A + S-adenosyl-L-homocysteine + 2 H(+). In terms of biological role, catalyzes the methylthiolation of an aspartic acid residue of ribosomal protein uS12. This chain is Ribosomal protein uS12 methylthiotransferase RimO, found in Salmonella typhi.